Reading from the N-terminus, the 420-residue chain is MQCSWKAVILLALVSIAIQYTAIRTFTAKPFHICPVPNPLNCGLGQDVESFDRMCDEYPYFNYNSSRKTHILILATTRSGSSFVGQLFNQHSDVFYLFEPLYHVQTTLIPHLSPSRYAVERRVMLGASRDLLRSLYNCDLYFLESYIKPQPANHTTDKLFRRGASKALCSMPVCDAFSPNDGNIEEGDCVRKCASLNLTLATESCRERRHVAIKTVRIPEVNDLKALIEDPRLNLKVIQLVRDPRGILSSRIETFRDTYRLWRIWRATGRKPYNLDLTQLTTVCDDFLNSVSTGLSRPPWLRGRYMLVRYEDLARNPLQKTKEVYEFLGLSLEKGVVDWIHNNTRGNNDVSAKHKYGTLRDSAANAESWRLKLSHDIVDYTQTVCQHILDELGYKAVNSPEELKNMSISLIEDKTFIPFL.

M1 is a topological domain (cytoplasmic). The helical; Signal-anchor for type II membrane protein transmembrane segment at 2–23 threads the bilayer; that stretch reads QCSWKAVILLALVSIAIQYTAI. At 24 to 420 the chain is on the lumenal side; sequence RTFTAKPFHI…IEDKTFIPFL (397 aa). Residue N64 is glycosylated (N-linked (GlcNAc...) asparagine). Position 77 to 83 (77 to 83) interacts with 3'-phosphoadenylyl sulfate; that stretch reads TRSGSSF. N-linked (GlcNAc...) asparagine glycosylation is found at N153 and N197. 242 to 250 is a binding site for 3'-phosphoadenylyl sulfate; that stretch reads RDPRGILSS. Residues N342 and N405 are each glycosylated (N-linked (GlcNAc...) asparagine).

This sequence belongs to the sulfotransferase 1 family. Gal/GlcNAc/GalNAc subfamily.

The protein localises to the golgi apparatus membrane. It carries out the reaction 3'-phosphoadenylyl sulfate + keratan = adenosine 3',5'-bisphosphate + keratan 6'-sulfate.. Its function is as follows. Sulfotransferase that utilizes 3'-phospho-5'-adenylyl sulfate (PAPS) as sulfonate donor to catalyze the transfer of sulfate to position 6 of galactose (Gal) residues of keratan. The protein is Carbohydrate sulfotransferase 1 (chst1) of Danio rerio (Zebrafish).